The chain runs to 256 residues: Type III pantothenate kinase (256 aa).

6 to 13 lines the ATP pocket; it reads DAGNSRIK. Substrate is bound by residues Tyr-90 and 97 to 100; that span reads GSDR. Catalysis depends on Asp-99, which acts as the Proton acceptor. Thr-123 serves as a coordination point for ATP. Position 187 (Thr-187) interacts with substrate.

It belongs to the type III pantothenate kinase family. Homodimer. It depends on NH4(+) as a cofactor. K(+) is required as a cofactor.

The protein localises to the cytoplasm. The enzyme catalyses (R)-pantothenate + ATP = (R)-4'-phosphopantothenate + ADP + H(+). It functions in the pathway cofactor biosynthesis; coenzyme A biosynthesis; CoA from (R)-pantothenate: step 1/5. In terms of biological role, catalyzes the phosphorylation of pantothenate (Pan), the first step in CoA biosynthesis. The chain is Type III pantothenate kinase from Burkholderia mallei (strain NCTC 10247).